The primary structure comprises 197 residues: Small ribosomal subunit protein uS4B (197 aa).

The 64-residue stretch at 88–151 (CRLDNIAYRI…RKNDEFADNF (64 aa)) folds into the S4 RNA-binding domain.

This sequence belongs to the universal ribosomal protein uS4 family. In terms of assembly, part of the 30S ribosomal subunit. Contacts protein S5. The interaction surface between S4 and S5 is involved in control of translational fidelity.

In terms of biological role, one of the primary rRNA binding proteins, it binds directly to 16S rRNA where it nucleates assembly of the body of the 30S subunit. Functionally, with S5 and S12 plays an important role in translational accuracy. In Clostridium botulinum (strain Langeland / NCTC 10281 / Type F), this protein is Small ribosomal subunit protein uS4B.